The sequence spans 350 residues: Formimidoylglutamase (350 aa).

Residues His130, Asp165, His167, Asp169, Asp269, and Asp271 each contribute to the Mn(2+) site.

The protein belongs to the arginase family. The cofactor is Mn(2+).

The enzyme catalyses N-formimidoyl-L-glutamate + H2O = formamide + L-glutamate. The protein operates within amino-acid degradation; L-histidine degradation into L-glutamate; L-glutamate from N-formimidoyl-L-glutamate (hydrolase route): step 1/1. Catalyzes the conversion of N-formimidoyl-L-glutamate to L-glutamate and formamide. This chain is Formimidoylglutamase, found in Aliivibrio fischeri (strain ATCC 700601 / ES114) (Vibrio fischeri).